A 305-amino-acid chain; its full sequence is Methionyl-tRNA formyltransferase (305 aa).

A (6S)-5,6,7,8-tetrahydrofolate-binding site is contributed by 108–111 (SLLP).

It belongs to the Fmt family.

It carries out the reaction L-methionyl-tRNA(fMet) + (6R)-10-formyltetrahydrofolate = N-formyl-L-methionyl-tRNA(fMet) + (6S)-5,6,7,8-tetrahydrofolate + H(+). Its function is as follows. Attaches a formyl group to the free amino group of methionyl-tRNA(fMet). The formyl group appears to play a dual role in the initiator identity of N-formylmethionyl-tRNA by promoting its recognition by IF2 and preventing the misappropriation of this tRNA by the elongation apparatus. The sequence is that of Methionyl-tRNA formyltransferase from Clavibacter sepedonicus (Clavibacter michiganensis subsp. sepedonicus).